The primary structure comprises 369 residues: MTIDFRTETTFGYTTGACAVSGAYSALYFLKNNKKLDFVEILNLKNETLIIPIQNIERSENTAFATVKKFSGKDIDITNNMTINVEVTLQKLDNNSNLKLIEIFGGNGVGIVTKRGLQIDVGDYAINPKPREMIEKNLISLLNDGEKAVVRISIPNGDEISKKTLNPKLGIIGGISILGTTGIVRPMSNDAYKESLLPQIDIAIQNGFENLVFVPGNIGTKYAKSVLNIEEDQIIEVSNFWGFMLEKAGEKGVKDITVFGHAGKIVKLAGGIFDTHSKVSDARNEILCAYTSTLCNNQELMKKILQSNTTEEIIEILAEKDILNEVFNLISKRVVERLCLRFPNIKFSCIIVDINGKILGKCFLGDRFD.

This sequence belongs to the CbiD family.

The catalysed reaction is Co-precorrin-5B + S-adenosyl-L-methionine = Co-precorrin-6A + S-adenosyl-L-homocysteine. The protein operates within cofactor biosynthesis; adenosylcobalamin biosynthesis; cob(II)yrinate a,c-diamide from sirohydrochlorin (anaerobic route): step 6/10. Its function is as follows. Catalyzes the methylation of C-1 in cobalt-precorrin-5B to form cobalt-precorrin-6A. The sequence is that of Cobalt-precorrin-5B C(1)-methyltransferase from Methanococcus vannielii (strain ATCC 35089 / DSM 1224 / JCM 13029 / OCM 148 / SB).